We begin with the raw amino-acid sequence, 414 residues long: MTQANLSETLFKPRFKHPETSTLVRRFNHGAQPPVQSALDGKTIPHWYRMINRLMWIWRGIDPREILDVQARIVMSDAERTDDDLYDTVIGYRGGNWIYEWATQAMVWQQKACAEEDPQLSGRHWLHAATLYNIAAYPHLKGDDLAEQAQALSNRAYEEAAQRLPGTMRQMEFTVPGGAPITGFLHMPKGDGPFPTVLMCGGLDAMQTDYYSLYERYFAPRGIAMLTIDMPSVGFSSKWKLTQDSSLLHQHVLKALPNVPWVDHTRVAAFGFRFGANVAVRLAYLESPRLKAVACLGPVVHTLLSDFKCQQQVPEMYLDVLASRLGMHDASDDALRVELNRYSLKVQGLLGRRCPTPMLSGYWKNDPFSPEEDSRLITSSSADGKLLEIPFNPVYRNFDKGLQEITGWIEKRLC.

It belongs to the FrsA family.

It catalyses the reaction a carboxylic ester + H2O = an alcohol + a carboxylate + H(+). In terms of biological role, catalyzes the hydrolysis of esters. The chain is Esterase FrsA from Escherichia coli O139:H28 (strain E24377A / ETEC).